The following is a 101-amino-acid chain: Small ribosomal subunit protein uS14 (101 aa).

The protein belongs to the universal ribosomal protein uS14 family. Part of the 30S ribosomal subunit. Contacts proteins S3 and S10.

In terms of biological role, binds 16S rRNA, required for the assembly of 30S particles and may also be responsible for determining the conformation of the 16S rRNA at the A site. The protein is Small ribosomal subunit protein uS14 of Anaplasma phagocytophilum (strain HZ).